A 92-amino-acid chain; its full sequence is Pyrimidine/purine nucleoside phosphorylase (92 aa).

It belongs to the nucleoside phosphorylase PpnP family.

It catalyses the reaction a purine D-ribonucleoside + phosphate = a purine nucleobase + alpha-D-ribose 1-phosphate. The enzyme catalyses adenosine + phosphate = alpha-D-ribose 1-phosphate + adenine. The catalysed reaction is cytidine + phosphate = cytosine + alpha-D-ribose 1-phosphate. It carries out the reaction guanosine + phosphate = alpha-D-ribose 1-phosphate + guanine. It catalyses the reaction inosine + phosphate = alpha-D-ribose 1-phosphate + hypoxanthine. The enzyme catalyses thymidine + phosphate = 2-deoxy-alpha-D-ribose 1-phosphate + thymine. The catalysed reaction is uridine + phosphate = alpha-D-ribose 1-phosphate + uracil. It carries out the reaction xanthosine + phosphate = alpha-D-ribose 1-phosphate + xanthine. In terms of biological role, catalyzes the phosphorolysis of diverse nucleosides, yielding D-ribose 1-phosphate and the respective free bases. Can use uridine, adenosine, guanosine, cytidine, thymidine, inosine and xanthosine as substrates. Also catalyzes the reverse reactions. This is Pyrimidine/purine nucleoside phosphorylase from Rhodopirellula baltica (strain DSM 10527 / NCIMB 13988 / SH1).